A 446-amino-acid chain; its full sequence is Ribosomal protein uS12 methylthiotransferase RimO (446 aa).

The 116-residue stretch at 4–119 folds into the MTTase N-terminal domain; it reads LKVGLISLGC…LVENINNFIS (116 aa). Positions 13, 48, 82, 157, 161, and 164 each coordinate [4Fe-4S] cluster. The 231-residue stretch at 143–373 folds into the Radical SAM core domain; it reads TTKSHTAYLR…MMLQKHIIYS (231 aa). Positions 376–442 constitute a TRAM domain; sequence KYKIGNKYKV…EYDLVGVVYD (67 aa).

It belongs to the methylthiotransferase family. RimO subfamily. [4Fe-4S] cluster is required as a cofactor.

The protein localises to the cytoplasm. The enzyme catalyses L-aspartate(89)-[ribosomal protein uS12]-hydrogen + (sulfur carrier)-SH + AH2 + 2 S-adenosyl-L-methionine = 3-methylsulfanyl-L-aspartate(89)-[ribosomal protein uS12]-hydrogen + (sulfur carrier)-H + 5'-deoxyadenosine + L-methionine + A + S-adenosyl-L-homocysteine + 2 H(+). Its function is as follows. Catalyzes the methylthiolation of an aspartic acid residue of ribosomal protein uS12. The polypeptide is Ribosomal protein uS12 methylthiotransferase RimO (Clostridium kluyveri (strain ATCC 8527 / DSM 555 / NBRC 12016 / NCIMB 10680 / K1)).